Reading from the N-terminus, the 301-residue chain is MANLRDIRKKIGSVKNTQKITHAMKLVSTSKLRKAEEVARNSRAYALKLDAVFDDVLSKMKNQGIEDIQSKYFRELERLEIKKVDIIFITADKGLCGGFNTNTIKKVLACTNEYKEKDIKVRLRGIGKKGNEYFSFNGIEVLDKINNLSSMPNYERAQEFMKKVVEDYLSGKTDKVIIIHNGFKNMISQEIRVKTILPIGYKIIHQNPQPNETQETITSEPSGSEDEILDSLAEKYVEYSLYYALIDSLAAEHSARMQAMDTATNNAKDLVKTLTISYNKARQEAITTELVEINAGVEALK.

Belongs to the ATPase gamma chain family. In terms of assembly, F-type ATPases have 2 components, CF(1) - the catalytic core - and CF(0) - the membrane proton channel. CF(1) has five subunits: alpha(3), beta(3), gamma(1), delta(1), epsilon(1). CF(0) has three main subunits: a, b and c.

It is found in the cell inner membrane. Its function is as follows. Produces ATP from ADP in the presence of a proton gradient across the membrane. The gamma chain is believed to be important in regulating ATPase activity and the flow of protons through the CF(0) complex. This Helicobacter pylori (strain Shi470) protein is ATP synthase gamma chain.